Here is a 932-residue protein sequence, read N- to C-terminus: Isoleucine--tRNA ligase (932 aa).

The 'HIGH' region motif lies at 58-68; it reads PYANGNLHLGH. Glu567 provides a ligand contact to L-isoleucyl-5'-AMP. The short motif at 608–612 is the 'KMSKS' region element; the sequence is KMSKS. ATP is bound at residue Lys611. Positions 895, 898, 915, and 918 each coordinate Zn(2+).

The protein belongs to the class-I aminoacyl-tRNA synthetase family. IleS type 1 subfamily. As to quaternary structure, monomer. Zn(2+) serves as cofactor.

The protein localises to the cytoplasm. The enzyme catalyses tRNA(Ile) + L-isoleucine + ATP = L-isoleucyl-tRNA(Ile) + AMP + diphosphate. Its function is as follows. Catalyzes the attachment of isoleucine to tRNA(Ile). As IleRS can inadvertently accommodate and process structurally similar amino acids such as valine, to avoid such errors it has two additional distinct tRNA(Ile)-dependent editing activities. One activity is designated as 'pretransfer' editing and involves the hydrolysis of activated Val-AMP. The other activity is designated 'posttransfer' editing and involves deacylation of mischarged Val-tRNA(Ile). This Azoarcus sp. (strain BH72) protein is Isoleucine--tRNA ligase.